A 201-amino-acid polypeptide reads, in one-letter code: Small ribosomal subunit protein uS4c (201 aa).

Residues Leu15–Gln43 form a disordered region. The S4 RNA-binding domain maps to Met89 to Asn150.

The protein belongs to the universal ribosomal protein uS4 family. Part of the 30S ribosomal subunit. Contacts protein S5. The interaction surface between S4 and S5 is involved in control of translational fidelity.

The protein localises to the plastid. The protein resides in the chloroplast. Its function is as follows. One of the primary rRNA binding proteins, it binds directly to 16S rRNA where it nucleates assembly of the body of the 30S subunit. In terms of biological role, with S5 and S12 plays an important role in translational accuracy. In Liriodendron tulipifera (Tuliptree), this protein is Small ribosomal subunit protein uS4c (rps4).